We begin with the raw amino-acid sequence, 422 residues long: Enolase (422 aa).

Gln-162 contributes to the (2R)-2-phosphoglycerate binding site. Glu-204 acts as the Proton donor in catalysis. The Mg(2+) site is built by Asp-241, Glu-285, and Asp-312. Residues Lys-337, Arg-366, Ser-367, and Lys-388 each contribute to the (2R)-2-phosphoglycerate site. The Proton acceptor role is filled by Lys-337.

It belongs to the enolase family. The cofactor is Mg(2+).

The protein localises to the cytoplasm. It is found in the secreted. The protein resides in the cell surface. The catalysed reaction is (2R)-2-phosphoglycerate = phosphoenolpyruvate + H2O. The protein operates within carbohydrate degradation; glycolysis; pyruvate from D-glyceraldehyde 3-phosphate: step 4/5. Functionally, catalyzes the reversible conversion of 2-phosphoglycerate (2-PG) into phosphoenolpyruvate (PEP). It is essential for the degradation of carbohydrates via glycolysis. The polypeptide is Enolase (Streptococcus thermophilus).